The chain runs to 510 residues: ATP synthase subunit alpha (510 aa).

Residue 169–176 (GDRQTGKT) coordinates ATP.

This sequence belongs to the ATPase alpha/beta chains family. In terms of assembly, F-type ATPases have 2 components, CF(1) - the catalytic core - and CF(0) - the membrane proton channel. CF(1) has five subunits: alpha(3), beta(3), gamma(1), delta(1), epsilon(1). CF(0) has four main subunits: a(1), b(1), b'(1) and c(9-12).

The protein localises to the cell inner membrane. It carries out the reaction ATP + H2O + 4 H(+)(in) = ADP + phosphate + 5 H(+)(out). In terms of biological role, produces ATP from ADP in the presence of a proton gradient across the membrane. The alpha chain is a regulatory subunit. In Rhodopseudomonas palustris (strain BisA53), this protein is ATP synthase subunit alpha.